A 128-amino-acid chain; its full sequence is Azurin (128 aa).

A Plastocyanin-like domain is found at 1–128 (ACDVSIEGND…IMKGTIELGS (128 aa)). A disulfide bridge connects residues Cys2 and Cys25. His45, Cys111, His116, and Met120 together coordinate Cu cation.

Monomer. Interacts with the AAUA/AAUB heterotetramer complex. Cu cation is required as a cofactor.

It is found in the periplasm. Transfers electrons from cytochrome c551 to cytochrome oxidase. Transfers electrons from the tryptophan tryptophylquinone of the aromatic amine dehydrogenase heterotetramer. The chain is Azurin from Alcaligenes faecalis.